The primary structure comprises 240 residues: Fibronectin type III domain-containing protein 5 (240 aa).

Positions 1 to 10 (MQAARGGAGR) are enriched in gly residues. Positions 1–30 (MQAARGGAGRPGREGRGLERECERSPGVGA) are disordered. A compositionally biased stretch (basic and acidic residues) spans 11 to 24 (PGREGRGLERECER). The 92-residue stretch at 64 to 155 (APVNVTVRHL…EPVLFKTPRE (92 aa)) folds into the Fibronectin type-III domain. N-linked (GlcNAc...) asparagine glycosylation is found at Asn67 and Asn112. A helical transmembrane segment spans residues 181-201 (GEVLIIVVVLFMWAGVIALFC). Over residues 210 to 221 (NEPNNNKEKTKS) the composition is skewed to basic and acidic residues. The interval 210 to 240 (NEPNNNKEKTKSASETSTPEHQGGGLLRSKI) is disordered. Gly residues predominate over residues 231–240 (QGGGLLRSKI). The short motif at 238-240 (SKI) is the Microbody targeting signal element.

As to quaternary structure, dimer; may exist in other oligomeric forms. In terms of processing, N-Glycosylated. Post-translationally, the extracellular domain is cleaved and released from the cell membrane.

It localises to the cell membrane. The protein localises to the peroxisome membrane. Its subcellular location is the secreted. In terms of biological role, mediates beneficial effects of muscular exercise. Induces browning of white adipose tissue by stimulating UCP1 expression, at least in part, via the nuclear receptor PPARA. This chain is Fibronectin type III domain-containing protein 5 (Fndc5), found in Rattus norvegicus (Rat).